The following is a 93-amino-acid chain: Putative defensin-like protein 283 (93 aa).

A signal peptide spans 1 to 24 (MTKIGFYLATYATIYIILSPGLLA). 3 disulfide bridges follow: cysteine 43/cysteine 83, cysteine 66/cysteine 90, and cysteine 72/cysteine 92.

Belongs to the DEFL family.

The protein resides in the secreted. In Arabidopsis thaliana (Mouse-ear cress), this protein is Putative defensin-like protein 283.